We begin with the raw amino-acid sequence, 396 residues long: MYKVILIRYGEIALKGQNRHVFINKLIENIKESLKGVGEYKLKKTLGRIYVFPNDNINQFIEKLKMVPGIVSLSPTAVCPLDFDSLKETSVKVLKDAINDYPATFKVETRRANKQFPYKSPEVSREIGAHLLRSINTPDHNILTVDVHNPRYTLKIEIRKKNIYVFTRSISGPGGLPVGSSGKGLLLLSGGIDSPVAGWLAMKRGIELEALYFHSFPYTSDRAKEKVIDLTKVLSRYCKKIKLYVGYFTDIQRAIQENCPQKYYITIMRRMMYRMAERIARKNGDLVLITGESVGQVASQTLESMNVINEVTNMPVLRPLATMNKTEIMDLAREIGTYDISILPHEDCCTIFVPRHPVTRPRLDRTLKAEEKLKAEIDGLLEDAIEKTEILEIKHG.

Residues 58–169 form the THUMP domain; it reads NQFIEKLKMV…KKNIYVFTRS (112 aa). ATP is bound by residues 187-188, 212-213, R269, G291, and Q300; these read LL and YF.

This sequence belongs to the ThiI family.

Its subcellular location is the cytoplasm. It carries out the reaction [ThiI sulfur-carrier protein]-S-sulfanyl-L-cysteine + a uridine in tRNA + 2 reduced [2Fe-2S]-[ferredoxin] + ATP + H(+) = [ThiI sulfur-carrier protein]-L-cysteine + a 4-thiouridine in tRNA + 2 oxidized [2Fe-2S]-[ferredoxin] + AMP + diphosphate. The catalysed reaction is [ThiS sulfur-carrier protein]-C-terminal Gly-Gly-AMP + S-sulfanyl-L-cysteinyl-[cysteine desulfurase] + AH2 = [ThiS sulfur-carrier protein]-C-terminal-Gly-aminoethanethioate + L-cysteinyl-[cysteine desulfurase] + A + AMP + 2 H(+). It functions in the pathway cofactor biosynthesis; thiamine diphosphate biosynthesis. Catalyzes the ATP-dependent transfer of a sulfur to tRNA to produce 4-thiouridine in position 8 of tRNAs, which functions as a near-UV photosensor. Also catalyzes the transfer of sulfur to the sulfur carrier protein ThiS, forming ThiS-thiocarboxylate. This is a step in the synthesis of thiazole, in the thiamine biosynthesis pathway. The sulfur is donated as persulfide by IscS. The chain is Probable tRNA sulfurtransferase from Halothermothrix orenii (strain H 168 / OCM 544 / DSM 9562).